A 140-amino-acid polypeptide reads, in one-letter code: Profilin-1 (140 aa).

A2 carries the N-acetylalanine modification. S28 is subject to Phosphoserine. K54 is covalently cross-linked (Glycyl lysine isopeptide (Lys-Gly) (interchain with G-Cter in SUMO2); alternate). Residue K54 forms a Glycyl lysine isopeptide (Lys-Gly) (interchain with G-Cter in ubiquitin); alternate linkage. A Phosphoserine modification is found at S57. At K108 the chain carries N6-acetyllysine. Y129 bears the Phosphotyrosine mark. A Phosphoserine; by ROCK1 modification is found at S138.

It belongs to the profilin family. In terms of assembly, found in a complex with XPO6, Ran, ACTB and PFN1. Interacts with ACTB. Interacts with VASP. Interacts with HTT. Interacts with SH3BGRL. Occurs in many kinds of cells as a complex with monomeric actin in a 1:1 ratio. Interacts with ACTMAP. Post-translationally, phosphorylation at Ser-138 reduces its affinity for G-actin and blocks its interaction with HTT, reducing its ability to inhibit androgen receptor (AR) and HTT aggregation.

Its subcellular location is the cytoplasm. It localises to the cytoskeleton. Functionally, binds to actin and affects the structure of the cytoskeleton. At high concentrations, profilin prevents the polymerization of actin, whereas it enhances it at low concentrations. By binding to PIP2, it inhibits the formation of IP3 and DG. Inhibits androgen receptor (AR) and HTT aggregation and binding of G-actin is essential for its inhibition of AR. The polypeptide is Profilin-1 (Pfn1) (Mus musculus (Mouse)).